A 198-amino-acid polypeptide reads, in one-letter code: Recombination protein RecR (198 aa).

A C4-type zinc finger spans residues 58-73; that stretch reads CKVCQTLTDKEICPIC. The Toprim domain maps to 81–175; it reads KVIMVVENTR…KVSRIASGVP (95 aa).

The protein belongs to the RecR family.

Its function is as follows. May play a role in DNA repair. It seems to be involved in an RecBC-independent recombinational process of DNA repair. It may act with RecF and RecO. The polypeptide is Recombination protein RecR (Lachnoclostridium phytofermentans (strain ATCC 700394 / DSM 18823 / ISDg) (Clostridium phytofermentans)).